The following is a 144-amino-acid chain: MAASKVKQDMPPVGGYGPIDYKRNLPRRGLSGYSMFAVGIGALLFGYWSMMKWNRERRRLQIEDFEARIALMPLLQAEKDRRVLQMLRENLEEEATVMKDVPGWKVGESVFHTTRWVTPMMGELYGLRASEEVLSATYGFIWYT.

A2 is modified (N-acetylalanine). Residues 30 to 51 traverse the membrane as a helical segment; the sequence is LSGYSMFAVGIGALLFGYWSMM.

As to quaternary structure, complex I is composed of 45 different subunits. Interacts with CARD15, but not with CARD4. Interacts with STAT3, but not with STAT1, STAT2 and STAT5A. Interacts with OLFM4.

It is found in the mitochondrion inner membrane. The protein resides in the nucleus. In terms of biological role, accessory subunit of the mitochondrial membrane respiratory chain NADH dehydrogenase (Complex I), that is believed not to be involved in catalysis. Complex I functions in the transfer of electrons from NADH to the respiratory chain. The immediate electron acceptor for the enzyme is believed to be ubiquinone. Involved in the interferon/all-trans-retinoic acid (IFN/RA) induced cell death. This apoptotic activity is inhibited by interaction with viral IRF1. Prevents the transactivation of STAT3 target genes. May play a role in CARD15-mediated innate mucosal responses and serve to regulate intestinal epithelial cell responses to microbes. This is NADH dehydrogenase [ubiquinone] 1 alpha subcomplex subunit 13 (NDUFA13) from Bos taurus (Bovine).